The primary structure comprises 199 residues: Mediator of RNA polymerase II transcription subunit 29 (199 aa).

The span at 1–17 (MAAPQPQAAAVSSASGV) shows a compositional bias: low complexity. The tract at residues 1–47 (MAAPQPQAAAVSSASGVSGPGSAGGPGPQQQPQPTQLVGSAQSGLLQ) is disordered. The residue at position 2 (Ala2) is an N-acetylalanine. Residues 18–27 (SGPGSAGGPG) are compositionally biased toward gly residues. Over residues 28–47 (PQQQPQPTQLVGSAQSGLLQ) the composition is skewed to low complexity.

This sequence belongs to the Mediator complex subunit 29 family. As to quaternary structure, component of the Mediator complex, which is composed of MED1, MED4, MED6, MED7, MED8, MED9, MED10, MED11, MED12, MED13, MED13L, MED14, MED15, MED16, MED17, MED18, MED19, MED20, MED21, MED22, MED23, MED24, MED25, MED26, MED27, MED29, MED30, MED31, CCNC, CDK8 and CDC2L6/CDK11. The MED12, MED13, CCNC and CDK8 subunits form a distinct module termed the CDK8 module. Mediator containing the CDK8 module is less active than Mediator lacking this module in supporting transcriptional activation. Individual preparations of the Mediator complex lacking one or more distinct subunits have been variously termed ARC, CRSP, DRIP, PC2, SMCC and TRAP. Associates with the MED18/MED20 heteromer.

It localises to the nucleus. Component of the Mediator complex, a coactivator involved in the regulated transcription of nearly all RNA polymerase II-dependent genes. Mediator functions as a bridge to convey information from gene-specific regulatory proteins to the basal RNA polymerase II transcription machinery. Mediator is recruited to promoters by direct interactions with regulatory proteins and serves as a scaffold for the assembly of a functional preinitiation complex with RNA polymerase II and the general transcription factors. This Mus musculus (Mouse) protein is Mediator of RNA polymerase II transcription subunit 29 (Med29).